A 500-amino-acid chain; its full sequence is Cytochrome P450 CYP736A12 (500 aa).

A helical membrane pass occupies residues 4–24 (LAYPLLFVLLGALSWWILPII). A heme-binding site is contributed by cysteine 442.

It belongs to the cytochrome P450 family. Heme serves as cofactor.

It localises to the membrane. In terms of biological role, probable heme-thiolate monooxygenase. The protein is Cytochrome P450 CYP736A12 of Panax ginseng (Korean ginseng).